The sequence spans 183 residues: Large ribosomal subunit protein bL17 (183 aa).

Basic and acidic residues predominate over residues 130–150; the sequence is GTKFAKDEKAKAEATEAKAEE. A disordered region spans residues 130-183; that stretch reads GTKFAKDEKAKAEATEAKAEETTETTESTEAESTEAPAEEAKAEDTAAEKKDES. A compositionally biased stretch (acidic residues) spans 151-162; that stretch reads TTETTESTEAES. Basic and acidic residues predominate over residues 168–183; that stretch reads EEAKAEDTAAEKKDES.

Belongs to the bacterial ribosomal protein bL17 family. As to quaternary structure, part of the 50S ribosomal subunit. Contacts protein L32.

The polypeptide is Large ribosomal subunit protein bL17 (Saccharopolyspora erythraea (strain ATCC 11635 / DSM 40517 / JCM 4748 / NBRC 13426 / NCIMB 8594 / NRRL 2338)).